We begin with the raw amino-acid sequence, 178 residues long: Large ribosomal subunit protein uL6 (178 aa).

Belongs to the universal ribosomal protein uL6 family. As to quaternary structure, part of the 50S ribosomal subunit.

Its function is as follows. This protein binds to the 23S rRNA, and is important in its secondary structure. It is located near the subunit interface in the base of the L7/L12 stalk, and near the tRNA binding site of the peptidyltransferase center. The polypeptide is Large ribosomal subunit protein uL6 (Streptococcus pneumoniae serotype 19F (strain G54)).